The sequence spans 329 residues: Putative helicase 109L (329 aa).

A Helicase ATP-binding domain is found at 105–259 (LTLLTQHKSC…LFDMFFGPEM (155 aa)). 118-125 (CYTGFGKT) provides a ligand contact to ATP. The DEAH box signature appears at 212 to 215 (DEAH).

It belongs to the DEAD box helicase family. DEAH subfamily.

This is Putative helicase 109L from Invertebrate iridescent virus 3 (IIV-3).